The primary structure comprises 425 residues: Phosphomethylpyrimidine synthase (425 aa).

Substrate contacts are provided by residues methionine 94, tyrosine 123, histidine 162, 184 to 186, 225 to 228, and glutamate 264; these read SRG and NGMR. A Zn(2+)-binding site is contributed by histidine 268. Tyrosine 291 provides a ligand contact to substrate. Histidine 332 is a binding site for Zn(2+). [4Fe-4S] cluster-binding residues include cysteine 407, cysteine 410, and cysteine 414.

It belongs to the ThiC family. [4Fe-4S] cluster serves as cofactor.

The catalysed reaction is 5-amino-1-(5-phospho-beta-D-ribosyl)imidazole + S-adenosyl-L-methionine = 4-amino-2-methyl-5-(phosphooxymethyl)pyrimidine + CO + 5'-deoxyadenosine + formate + L-methionine + 3 H(+). It participates in cofactor biosynthesis; thiamine diphosphate biosynthesis. Functionally, catalyzes the synthesis of the hydroxymethylpyrimidine phosphate (HMP-P) moiety of thiamine from aminoimidazole ribotide (AIR) in a radical S-adenosyl-L-methionine (SAM)-dependent reaction. The sequence is that of Phosphomethylpyrimidine synthase from Methanocorpusculum labreanum (strain ATCC 43576 / DSM 4855 / Z).